Here is a 196-residue protein sequence, read N- to C-terminus: Cysteine/O-acetylserine efflux protein (196 aa).

Residues 1 to 21 (MTPTLISAFLTYTLITALTPG) traverse the membrane as a helical segment. Residues 22–41 (PNNILALSSVTSHGLRRSLR) lie on the Cytoplasmic side of the membrane. A helical transmembrane segment spans residues 42-62 (VLAGMSVGFIITMLICAALTF). Topologically, residues 63–70 (SLVELDSR) are periplasmic. Residues 71 to 91 (FTLVLGWIGAAYILWLAWQIA) traverse the membrane as a helical segment. At 92–114 (KSKPATGTPSVEPVGFWASLGLQ) the chain is on the cytoplasmic side. The chain crosses the membrane as a helical span at residues 115 to 135 (FVNVKIILYGITALSTFVLPV). At 136-139 (TREP) the chain is on the periplasmic side. A helical membrane pass occupies residues 140 to 160 (VWLISVSLLLAAIGALGNLCW). Residues 161-170 (ALAGHLFQRL) lie on the Cytoplasmic side of the membrane. Residues 171-191 (FLLYGRQLNWMLAALLVYCAV) form a helical membrane-spanning segment. Over 192 to 196 (RIVVE) the chain is Periplasmic.

It belongs to the Rht family.

It is found in the cell inner membrane. It catalyses the reaction O-acetyl-L-serine(in) = O-acetyl-L-serine(out). The catalysed reaction is L-cysteine(in) = L-cysteine(out). In terms of biological role, exporter of O-acetylserine (OAS) and cysteine. This Klebsiella pneumoniae subsp. pneumoniae (strain ATCC 700721 / MGH 78578) protein is Cysteine/O-acetylserine efflux protein (eamB).